The primary structure comprises 430 residues: Glutamate-1-semialdehyde 2,1-aminomutase (430 aa).

At K265 the chain carries N6-(pyridoxal phosphate)lysine.

It belongs to the class-III pyridoxal-phosphate-dependent aminotransferase family. HemL subfamily. In terms of assembly, homodimer. Pyridoxal 5'-phosphate is required as a cofactor.

Its subcellular location is the cytoplasm. It catalyses the reaction (S)-4-amino-5-oxopentanoate = 5-aminolevulinate. Its pathway is porphyrin-containing compound metabolism; protoporphyrin-IX biosynthesis; 5-aminolevulinate from L-glutamyl-tRNA(Glu): step 2/2. This Shewanella sp. (strain MR-7) protein is Glutamate-1-semialdehyde 2,1-aminomutase.